The primary structure comprises 80 residues: MPKKNEAPASFEKALSELEQIVTRLESGDLPLEEALNEFERGVQLARQGQAKLQQAEQRVQILLSDNEDTSLPPFTPDNE.

It belongs to the XseB family. In terms of assembly, heterooligomer composed of large and small subunits.

Its subcellular location is the cytoplasm. The enzyme catalyses Exonucleolytic cleavage in either 5'- to 3'- or 3'- to 5'-direction to yield nucleoside 5'-phosphates.. Functionally, bidirectionally degrades single-stranded DNA into large acid-insoluble oligonucleotides, which are then degraded further into small acid-soluble oligonucleotides. This Shigella sonnei (strain Ss046) protein is Exodeoxyribonuclease 7 small subunit.